Consider the following 203-residue polypeptide: Glycerol-3-phosphate acyltransferase (203 aa).

4 helical membrane passes run 4-24 (LVLL…AVLI), 80-100 (PFLL…PIFF), 116-136 (APIG…TVFI), and 138-158 (GYSS…TWFV).

This sequence belongs to the PlsY family. Probably interacts with PlsX.

The protein localises to the cell inner membrane. It carries out the reaction an acyl phosphate + sn-glycerol 3-phosphate = a 1-acyl-sn-glycero-3-phosphate + phosphate. Its pathway is lipid metabolism; phospholipid metabolism. In terms of biological role, catalyzes the transfer of an acyl group from acyl-phosphate (acyl-PO(4)) to glycerol-3-phosphate (G3P) to form lysophosphatidic acid (LPA). This enzyme utilizes acyl-phosphate as fatty acyl donor, but not acyl-CoA or acyl-ACP. The polypeptide is Glycerol-3-phosphate acyltransferase (Photobacterium profundum (strain SS9)).